Consider the following 505-residue polypeptide: Bile acid-sensitive ion channel (505 aa).

The binds the plasma membrane and stabilizes the channel in the closed state stretch occupies residues 1 to 30 (MEQTEKSKVYAENGLLEKIKLCLSKKPLPS). Residues 1-61 (MEQTEKSKVY…NIVQNRSKIR (61 aa)) are Cytoplasmic-facing. Residues 62-82 (RVLWLVVVLGSVSLVTWQIYI) form a helical membrane-spanning segment. Residues 83–459 (RLLNYFTWPT…GLFCGASLIT (377 aa)) lie on the Extracellular side of the membrane. Disulfide bonds link cysteine 112-cysteine 207, cysteine 185-cysteine 192, cysteine 298-cysteine 377, cysteine 315-cysteine 373, cysteine 328-cysteine 350, and cysteine 330-cysteine 342. Asparagine 147, asparagine 163, asparagine 178, and asparagine 179 each carry an N-linked (GlcNAc...) asparagine glycan. Residue asparagine 306 is glycosylated (N-linked (GlcNAc...) asparagine). N-linked (GlcNAc...) asparagine glycans are attached at residues asparagine 370, asparagine 405, and asparagine 421. The GAS motif; ion selectivity filter signature appears at 454–456 (GAS). The chain crosses the membrane as a helical span at residues 460 to 480 (IIEIIEYLFTNFYWICIFFLL). Residues 481–505 (KISEMTQWTPPPQNHLGNKNRIEEC) are Cytoplasmic-facing.

It belongs to the amiloride-sensitive sodium channel (TC 1.A.6) family. ASIC5 subfamily. In terms of assembly, forms homotrimeric channels. In terms of tissue distribution, detected in small intestine, duodenum and jejunum. Detected at very low levels in testis and rectum.

Its subcellular location is the apical cell membrane. It is found in the cell membrane. It catalyses the reaction Na(+)(in) = Na(+)(out). The enzyme catalyses Li(+)(in) = Li(+)(out). It carries out the reaction K(+)(in) = K(+)(out). The catalysed reaction is H(+)(in) = H(+)(out). With respect to regulation, inhibited by the diuretic drug amiloride. Its function is as follows. Forms bile acid-gated sodium channels and may play a role in bile acid-dependent absorption and secretion by epithelial cells of the bile ducts. Displays high selectivity for sodium ions but can also permit the permeation of other cations. The gating could be indirect and the consequence of alterations of the membrane environment of the channel by bile acids. As a sodium channel of type II unipolar brush cells of the vestibulocerebellum, controlling the electrical activity of these cells, could play a role in motor coordination and balance. The protein is Bile acid-sensitive ion channel of Homo sapiens (Human).